The sequence spans 404 residues: Calcium/calmodulin-dependent protein kinase cmkB (404 aa).

In terms of domain architecture, Protein kinase spans 18–279 (YKTGKTLGAG…AHQALQHPWI (262 aa)). ATP contacts are provided by residues 24–32 (LGAGLYSVV) and Lys-47. Residue Asp-141 is the Proton acceptor of the active site. Residue Thr-179 is modified to Phosphothreonine; by cmkC. Residues 279–322 (INPPYDTTDDLGSGEDLLPNIKKNFNARRTLHKAIDTVRAINKL) are autoinhibitory domain. The segment at 301-323 (KNFNARRTLHKAIDTVRAINKLR) is calmodulin-binding. The disordered stretch occupies residues 336 to 404 (VDPKPEHVNG…WSRTAPRSER (69 aa)). Basic and acidic residues-rich tracts occupy residues 338–370 (PKPE…DSRS) and 379–389 (QIREQERKVKE).

It belongs to the protein kinase superfamily. CAMK Ser/Thr protein kinase family. CaMK subfamily. Phosphorylated by cmkC on Thr-179.

It catalyses the reaction L-seryl-[protein] + ATP = O-phospho-L-seryl-[protein] + ADP + H(+). The enzyme catalyses L-threonyl-[protein] + ATP = O-phospho-L-threonyl-[protein] + ADP + H(+). Its activity is regulated as follows. Activated by Ca(2+)/calmodulin. Binding of calmodulin results in conformational change that relieves intrasteric autoinhibition and allows phosphorylation of Thr-179 within the activation loop by cmkC. In terms of biological role, calcium/calmodulin-dependent protein kinase that operates in the calcium-triggered CaMKK-CaMK1 signaling cascade. Required in G1-phase of the cell cycle for proper timing of the initial nuclear division after germination, but not for subsequent mitoses. Required for the normal temporal regulation of nimX activity. This chain is Calcium/calmodulin-dependent protein kinase cmkB, found in Emericella nidulans (Aspergillus nidulans).